A 154-amino-acid polypeptide reads, in one-letter code: Yop proteins translocation protein O (154 aa).

The tract at residues 132-154 (ELNQQHYQEEQEQEEFLQHHRNA) is disordered.

This sequence belongs to the SpaM family.

Component of the yop secretion machinery. The polypeptide is Yop proteins translocation protein O (yscO) (Yersinia pseudotuberculosis serotype I (strain IP32953)).